Consider the following 308-residue polypeptide: GTPase Era (308 aa).

Residues 14 to 181 (RCGFVALIGA…KQALAAMVPP (168 aa)) enclose the Era-type G domain. A G1 region spans residues 22–29 (GAPNVGKS). 22–29 (GAPNVGKS) contributes to the GTP binding site. The segment at 48-52 (QTTRA) is G2. The segment at 69–72 (DTPG) is G3. Residues 69 to 73 (DTPGI) and 131 to 134 (NKVD) contribute to the GTP site. The interval 131 to 134 (NKVD) is G4. Residues 160–162 (ISA) are G5. Positions 212 to 289 (LHQELPYQST…HLFLFVKVRE (78 aa)) constitute a KH type-2 domain.

The protein belongs to the TRAFAC class TrmE-Era-EngA-EngB-Septin-like GTPase superfamily. Era GTPase family. Monomer.

It localises to the cytoplasm. It is found in the cell inner membrane. Functionally, an essential GTPase that binds both GDP and GTP, with rapid nucleotide exchange. Plays a role in 16S rRNA processing and 30S ribosomal subunit biogenesis and possibly also in cell cycle regulation and energy metabolism. This is GTPase Era from Bradyrhizobium sp. (strain BTAi1 / ATCC BAA-1182).